Reading from the N-terminus, the 265-residue chain is Neuronal membrane glycoprotein M6-b (265 aa).

The chain crosses the membrane as a helical span at residues glycine 31–phenylalanine 51. An N-linked (GlcNAc...) asparagine glycan is attached at asparagine 73. Transmembrane regions (helical) follow at residues valine 90–phenylalanine 110 and phenylalanine 136–valine 156. An N-linked (GlcNAc...) asparagine glycan is attached at asparagine 177. A helical membrane pass occupies residues leucine 224 to methionine 244. Serine 257 carries the phosphoserine modification.

This sequence belongs to the myelin proteolipid protein family. In terms of assembly, interacts with SERT.

Its subcellular location is the membrane. The protein resides in the cell membrane. Its function is as follows. May be involved in neural development. Involved in regulation of osteoblast function and bone formation. Involved in matrix vesicle release by osteoblasts; this function seems to involve maintenance of the actin cytoskeleton. May be involved in cellular trafficking of SERT and thereby in regulation of serotonin uptake. This is Neuronal membrane glycoprotein M6-b (GPM6B) from Pongo abelii (Sumatran orangutan).